The chain runs to 168 residues: uncharacterized protein (168 aa).

The region spanning 7-168 (ERIDTLKTGD…TAKGWPDISM (162 aa)) is the N-acetyltransferase domain.

This is an uncharacterized protein from Azospirillum brasilense.